Consider the following 180-residue polypeptide: ATP-dependent protease subunit HslV (180 aa).

Thr8 is a catalytic residue. Na(+) contacts are provided by Gly165, Cys168, and Thr171.

Belongs to the peptidase T1B family. HslV subfamily. As to quaternary structure, a double ring-shaped homohexamer of HslV is capped on each side by a ring-shaped HslU homohexamer. The assembly of the HslU/HslV complex is dependent on binding of ATP.

The protein resides in the cytoplasm. It catalyses the reaction ATP-dependent cleavage of peptide bonds with broad specificity.. With respect to regulation, allosterically activated by HslU binding. Protease subunit of a proteasome-like degradation complex believed to be a general protein degrading machinery. The protein is ATP-dependent protease subunit HslV of Halalkalibacterium halodurans (strain ATCC BAA-125 / DSM 18197 / FERM 7344 / JCM 9153 / C-125) (Bacillus halodurans).